We begin with the raw amino-acid sequence, 424 residues long: Glutamate-1-semialdehyde 2,1-aminomutase (424 aa).

Lys266 is subject to N6-(pyridoxal phosphate)lysine.

It belongs to the class-III pyridoxal-phosphate-dependent aminotransferase family. HemL subfamily. In terms of assembly, homodimer. Requires pyridoxal 5'-phosphate as cofactor.

The protein resides in the cytoplasm. The enzyme catalyses (S)-4-amino-5-oxopentanoate = 5-aminolevulinate. Its pathway is porphyrin-containing compound metabolism; protoporphyrin-IX biosynthesis; 5-aminolevulinate from L-glutamyl-tRNA(Glu): step 2/2. The chain is Glutamate-1-semialdehyde 2,1-aminomutase from Thermus thermophilus (strain ATCC 27634 / DSM 579 / HB8).